The following is a 57-amino-acid chain: Large ribosomal subunit protein bL32 (57 aa).

It belongs to the bacterial ribosomal protein bL32 family.

In Streptomyces avermitilis (strain ATCC 31267 / DSM 46492 / JCM 5070 / NBRC 14893 / NCIMB 12804 / NRRL 8165 / MA-4680), this protein is Large ribosomal subunit protein bL32.